Reading from the N-terminus, the 418-residue chain is Light-independent protochlorophyllide reductase subunit N (418 aa).

[4Fe-4S] cluster contacts are provided by cysteine 17, cysteine 42, and cysteine 103.

This sequence belongs to the BchN/ChlN family. As to quaternary structure, protochlorophyllide reductase is composed of three subunits; ChlL, ChlN and ChlB. Forms a heterotetramer of two ChlB and two ChlN subunits. Requires [4Fe-4S] cluster as cofactor.

The catalysed reaction is chlorophyllide a + oxidized 2[4Fe-4S]-[ferredoxin] + 2 ADP + 2 phosphate = protochlorophyllide a + reduced 2[4Fe-4S]-[ferredoxin] + 2 ATP + 2 H2O. It participates in porphyrin-containing compound metabolism; chlorophyll biosynthesis (light-independent). In terms of biological role, component of the dark-operative protochlorophyllide reductase (DPOR) that uses Mg-ATP and reduced ferredoxin to reduce ring D of protochlorophyllide (Pchlide) to form chlorophyllide a (Chlide). This reaction is light-independent. The NB-protein (ChlN-ChlB) is the catalytic component of the complex. This is Light-independent protochlorophyllide reductase subunit N from Prochlorococcus marinus (strain MIT 9303).